Consider the following 245-residue polypeptide: NAD-dependent protein deacylase 1 (245 aa).

The Deacetylase sirtuin-type domain maps to 1 to 243 (MDEKLLKTIA…DELVRHVRKA (243 aa)). Position 20 to 39 (20 to 39 (GAGVSAESGIPTFRGKDGLW)) interacts with NAD(+). Residues Tyr64 and Arg67 each coordinate substrate. 98–101 (QNVD) provides a ligand contact to NAD(+). The active-site Proton acceptor is the His116. Cys124, Cys127, Cys145, and Cys148 together coordinate Zn(2+). Residues 185–187 (GTS), 211–213 (NPD), and Ala229 contribute to the NAD(+) site.

This sequence belongs to the sirtuin family. Class III subfamily. Zn(2+) is required as a cofactor.

It localises to the cytoplasm. The catalysed reaction is N(6)-acetyl-L-lysyl-[protein] + NAD(+) + H2O = 2''-O-acetyl-ADP-D-ribose + nicotinamide + L-lysyl-[protein]. It catalyses the reaction N(6)-succinyl-L-lysyl-[protein] + NAD(+) + H2O = 2''-O-succinyl-ADP-D-ribose + nicotinamide + L-lysyl-[protein]. NAD-dependent lysine deacetylase and desuccinylase that specifically removes acetyl and succinyl groups on target proteins. Modulates the activities of several proteins which are inactive in their acylated form. Deacetylates the N-terminal lysine residue of Alba, the major archaeal chromatin protein and that, in turn, increases Alba's DNA binding affinity, thereby repressing transcription. The chain is NAD-dependent protein deacylase 1 from Archaeoglobus fulgidus (strain ATCC 49558 / DSM 4304 / JCM 9628 / NBRC 100126 / VC-16).